The primary structure comprises 303 residues: Bifunctional protein FolD (303 aa).

NADP(+) contacts are provided by residues 165–167 (GRS), S190, and I231.

This sequence belongs to the tetrahydrofolate dehydrogenase/cyclohydrolase family. Homodimer.

It carries out the reaction (6R)-5,10-methylene-5,6,7,8-tetrahydrofolate + NADP(+) = (6R)-5,10-methenyltetrahydrofolate + NADPH. The catalysed reaction is (6R)-5,10-methenyltetrahydrofolate + H2O = (6R)-10-formyltetrahydrofolate + H(+). Its pathway is one-carbon metabolism; tetrahydrofolate interconversion. Its function is as follows. Catalyzes the oxidation of 5,10-methylenetetrahydrofolate to 5,10-methenyltetrahydrofolate and then the hydrolysis of 5,10-methenyltetrahydrofolate to 10-formyltetrahydrofolate. The chain is Bifunctional protein FolD from Prochlorococcus marinus (strain NATL2A).